Consider the following 123-residue polypeptide: Acidic phospholipase A2 (123 aa).

7 disulfides stabilise this stretch: cysteine 26–cysteine 116, cysteine 28–cysteine 44, cysteine 43–cysteine 95, cysteine 49–cysteine 123, cysteine 50–cysteine 88, cysteine 57–cysteine 81, and cysteine 75–cysteine 86. Ca(2+)-binding residues include tyrosine 27, glycine 29, and glycine 31. Residue histidine 47 is part of the active site. Position 48 (aspartate 48) interacts with Ca(2+). Aspartate 89 is a catalytic residue.

This sequence belongs to the phospholipase A2 family. Group II subfamily. D49 sub-subfamily. As to quaternary structure, homodimer. The cofactor is Ca(2+). As to expression, expressed by the venom gland.

The protein localises to the secreted. The catalysed reaction is a 1,2-diacyl-sn-glycero-3-phosphocholine + H2O = a 1-acyl-sn-glycero-3-phosphocholine + a fatty acid + H(+). Snake venom phospholipase A2 (PLA2) that inhibits ADP-induced platelet aggregation. PLA2 catalyzes the calcium-dependent hydrolysis of the 2-acyl groups in 3-sn-phosphoglycerides. The chain is Acidic phospholipase A2 from Deinagkistrodon acutus (Hundred-pace snake).